A 290-amino-acid chain; its full sequence is Arylamine N-acetyltransferase 1 (290 aa).

An N-acetylmethionine modification is found at Met-1. The active-site Acyl-thioester intermediate is the Cys-68. Ser-103 serves as a coordination point for CoA. 106-107 is a substrate binding site; it reads VH. Catalysis depends on residues His-107 and Asp-122. Tyr-208 serves as a coordination point for CoA.

It belongs to the arylamine N-acetyltransferase family.

The protein resides in the cytoplasm. The catalysed reaction is an arylamine + acetyl-CoA = an N-acetylarylamine + CoA. In terms of biological role, participates in the detoxification of a plethora of hydrazine and arylamine drugs. Isoniazid, 2-aminofluorene and anisidine are preferred substrates for NAT-1. No activity with p-aminobenzoic acid (PABA) nor SMZ. The chain is Arylamine N-acetyltransferase 1 (Nat1) from Mus musculus (Mouse).